Consider the following 148-residue polypeptide: NTR domain-containing protein (148 aa).

The N-terminal stretch at 1–26 (MVCRFSYVQVVLILVVLSVIISWANA) is a signal peptide. Intrachain disulfides connect Cys-27/Cys-96, Cys-29/Cys-122, and Cys-40/Cys-146. One can recognise an NTR domain in the interval 27–146 (CSCFPPDETR…LQLFNDPQWC (120 aa)).

Prismatic layer of shell (at protein level). Expressed primarily in the mantle with highest level in the mantle edge and lower level in the mantle pallium.

The protein resides in the secreted. This chain is NTR domain-containing protein, found in Margaritifera margaritifera (Freshwater pearl mussel).